The sequence spans 168 residues: mRNA stability protein IGO1 (168 aa).

The span at 1–13 (MSNENLSPNSSNP) shows a compositional bias: low complexity. A disordered region spans residues 1-31 (MSNENLSPNSSNPDLTKLNNGESGTIDTSKF). A compositionally biased stretch (polar residues) spans 17–31 (KLNNGESGTIDTSKF). Residues serine 32 and serine 64 each carry the phosphoserine modification. The interval 125-168 (KEGSISSGPPSSNNGTIGGGSTSSTPVGNHSSSSSSLYTESPIR) is disordered. 2 stretches are compositionally biased toward low complexity: residues 127-139 (GSIS…SNNG) and 146-168 (TSST…SPIR).

It belongs to the endosulfine family. As to quaternary structure, interacts with RIM15, DHH1, PBP1, PBP4 and LSM12. In terms of processing, phosphorylated at Ser-64 by RIM15.

In terms of biological role, required for TORC1 to properly control gene expression and chronological life span. Plays an essential role in initiation of the G0 program by preventing the degradation of specific nutrient-regulated mRNAs via the 5'-3' mRNA decay pathway. The sequence is that of mRNA stability protein IGO1 (IGO1) from Saccharomyces cerevisiae (strain ATCC 204508 / S288c) (Baker's yeast).